The chain runs to 548 residues: C-type lectin domain family 4 member F (548 aa).

Residues 1-42 are Cytoplasmic-facing; that stretch reads MKEAELNRDMARYCTDNQCVSLQPQGLGPKSAALMAPRTLRH. The chain crosses the membrane as a helical; Signal-anchor for type II membrane protein span at residues 43 to 69; the sequence is VQVILALMVVTVIFSLLALFVVASQPW. Over 70–548 the chain is Extracellular; it reads RPEWNKEPPS…STGWSAARVG (479 aa). Residues Asn86, Asn92, Asn115, Asn132, Asn209, and Asn255 are each glycosylated (N-linked (GlcNAc...) asparagine). The C-type lectin domain maps to 438–538; the sequence is KFCTSQGAHL…GSSYPWVCKK (101 aa). 2 disulfides stabilise this stretch: Cys440–Cys536 and Cys516–Cys528.

Kupffer cells.

It localises to the membrane. Its function is as follows. Receptor with an affinity for galactose and fucose. Could be involved in endocytosis. The chain is C-type lectin domain family 4 member F (Clec4f) from Mus musculus (Mouse).